The primary structure comprises 818 residues: Protocadherin beta-1 (818 aa).

Residues 1-28 (MAGTRRKSLQNRQVGSLLIFLCISVGDA) form the signal peptide. At 29–691 (TTIRYSVAEE…RKVNPSTKYL (663 aa)) the chain is on the extracellular side. 5 Cadherin domains span residues 35-133 (VAEE…APVF), 138-242 (PLLK…VPQF), 243-347 (SRLV…PPEV), 348-452 (MVSS…PPIF), and 457-562 (YILT…RPMI). N-linked (GlcNAc...) asparagine glycosylation is found at Asn169, Asn209, Asn257, and Asn419. N-linked (GlcNAc...) asparagine glycosylation is present at Asn568. Positions 577–672 (VPRSAEAGYL…LVDGFSEPYL (96 aa)) constitute a Cadherin 6 domain. A helical membrane pass occupies residues 692–712 (VISLVILSFLFLLSVIVIFII). Over 713 to 818 (HVYQKIKYRE…GHDQVSDDYM (106 aa)) the chain is Cytoplasmic. The interval 789 to 818 (MEAGSSLPPNSDRNKSQRLEGHDQVSDDYM) is disordered. Over residues 800–818 (DRNKSQRLEGHDQVSDDYM) the composition is skewed to basic and acidic residues.

It is found in the cell membrane. In terms of biological role, potential calcium-dependent cell-adhesion protein. May be involved in the establishment and maintenance of specific neuronal connections in the brain. This is Protocadherin beta-1 (PCDHB1) from Homo sapiens (Human).